The primary structure comprises 151 residues: Ribosome-binding factor A (151 aa).

The disordered stretch occupies residues 116–151 (DAEVARAAANARPAGDPDPYREPRPADDDDEDDEDE). Low complexity predominate over residues 120 to 129 (ARAAANARPA). Residues 142-151 (DDDDEDDEDE) show a composition bias toward acidic residues.

This sequence belongs to the RbfA family. Monomer. Binds 30S ribosomal subunits, but not 50S ribosomal subunits or 70S ribosomes.

It localises to the cytoplasm. One of several proteins that assist in the late maturation steps of the functional core of the 30S ribosomal subunit. Associates with free 30S ribosomal subunits (but not with 30S subunits that are part of 70S ribosomes or polysomes). Required for efficient processing of 16S rRNA. May interact with the 5'-terminal helix region of 16S rRNA. The sequence is that of Ribosome-binding factor A from Thermobifida fusca (strain YX).